Consider the following 440-residue polypeptide: Chromosome partition protein MukF (440 aa).

The segment at 208 to 236 (LSETSGTLRELQDTLEAAGDKLQANLLRI) is leucine-zipper.

Belongs to the MukF family. Interacts, and probably forms a ternary complex, with MukE and MukB via its C-terminal region. The complex formation is stimulated by calcium or magnesium. It is required for an interaction between MukE and MukB.

It is found in the cytoplasm. The protein resides in the nucleoid. Functionally, involved in chromosome condensation, segregation and cell cycle progression. May participate in facilitating chromosome segregation by condensation DNA from both sides of a centrally located replisome during cell division. Not required for mini-F plasmid partitioning. Probably acts via its interaction with MukB and MukE. Overexpression results in anucleate cells. It has a calcium binding activity. The polypeptide is Chromosome partition protein MukF (Escherichia coli (strain UTI89 / UPEC)).